The sequence spans 190 residues: Adenylate kinase (190 aa).

12 to 17 lines the ATP pocket; that stretch reads GSGKTT. The NMP stretch occupies residues 34-63; it reads STGDLLREEVASGSEYGKTIDSFISKGNLV. AMP contacts are provided by residues Thr-35, Arg-40, 61 to 63, 88 to 91, and Gln-95; these read NLV and GYPR. The LID stretch occupies residues 130-136; sequence GRARGAD. ATP is bound at residue Arg-131. AMP-binding residues include Arg-133 and Arg-145. Arg-173 provides a ligand contact to ATP.

The protein belongs to the adenylate kinase family. Monomer.

The protein resides in the cytoplasm. The catalysed reaction is AMP + ATP = 2 ADP. The protein operates within purine metabolism; AMP biosynthesis via salvage pathway; AMP from ADP: step 1/1. Functionally, catalyzes the reversible transfer of the terminal phosphate group between ATP and AMP. Plays an important role in cellular energy homeostasis and in adenine nucleotide metabolism. This chain is Adenylate kinase, found in Helicobacter hepaticus (strain ATCC 51449 / 3B1).